The primary structure comprises 182 residues: N-alpha-acetyltransferase daf-31 (182 aa).

The region spanning 1–152 is the N-acetyltransferase domain; sequence MNIRCARVDD…DAYAMRRDLA (152 aa). The disordered stretch occupies residues 162–182; the sequence is PADREAYTTAKTTDDKKKNRS.

This sequence belongs to the acetyltransferase family. ARD1 subfamily. As to quaternary structure, component of the N-terminal acetyltransferase A (NatA) complex. Expressed in head and tail hypodermal cells, hypodermal seam cells, pharynx, intestine and head and tail neurons.

It carries out the reaction N-terminal glycyl-[protein] + acetyl-CoA = N-terminal N(alpha)-acetylglycyl-[protein] + CoA + H(+). It catalyses the reaction N-terminal L-alanyl-[protein] + acetyl-CoA = N-terminal N(alpha)-acetyl-L-alanyl-[protein] + CoA + H(+). The catalysed reaction is N-terminal L-seryl-[protein] + acetyl-CoA = N-terminal N(alpha)-acetyl-L-seryl-[protein] + CoA + H(+). The enzyme catalyses N-terminal L-valyl-[protein] + acetyl-CoA = N-terminal N(alpha)-acetyl-L-valyl-[protein] + CoA + H(+). It carries out the reaction N-terminal L-cysteinyl-[protein] + acetyl-CoA = N-terminal N(alpha)-acetyl-L-cysteinyl-[protein] + CoA + H(+). It catalyses the reaction N-terminal L-threonyl-[protein] + acetyl-CoA = N-terminal N(alpha)-acetyl-L-threonyl-[protein] + CoA + H(+). Its function is as follows. Catalytic subunit of the N-terminal acetyltransferase A (NatA) complex which displays alpha (N-terminal) acetyltransferase activity. Plays a role in regulating larval development, metabolism and longevity. Functions downstream or alongside daf-3, daf-12 and daf-16 in the dauer formation pathway. Functions upstream of daf-15 to enable animal development. The polypeptide is N-alpha-acetyltransferase daf-31 (Caenorhabditis elegans).